We begin with the raw amino-acid sequence, 188 residues long: Cytidylate kinase (188 aa).

Residue 7–15 (GKIGSGKST) participates in ATP binding.

Belongs to the cytidylate kinase family. Type 2 subfamily.

Its subcellular location is the cytoplasm. It carries out the reaction CMP + ATP = CDP + ADP. The catalysed reaction is dCMP + ATP = dCDP + ADP. The polypeptide is Cytidylate kinase (cmk) (Thermoplasma acidophilum (strain ATCC 25905 / DSM 1728 / JCM 9062 / NBRC 15155 / AMRC-C165)).